We begin with the raw amino-acid sequence, 113 residues long: Hydrogenase maturation factor HypA (113 aa).

A Ni(2+)-binding site is contributed by H2. Zn(2+)-binding residues include C70, C73, C86, and C88.

Belongs to the HypA/HybF family.

In terms of biological role, involved in the maturation of [NiFe] hydrogenases. Required for nickel insertion into the metal center of the hydrogenase. This chain is Hydrogenase maturation factor HypA, found in Nostoc punctiforme (strain ATCC 29133 / PCC 73102).